Reading from the N-terminus, the 483-residue chain is MQLKDAKLFRQQAYVDGAWVDADNGQTIKVNNPATGEIIGSVPKMGAAETRRAIEAADKALPAWRALTAKERANKLRRWFDLMIENQDDLARLMTIEQGKPLAEAKGEIAYAASFLEWFGEEAKRIYGDTIPGHQPDKRIIVIKQPIGVTAAITPWNFPSAMITRKAGPALAAGCTMVLKPASQTPYSALALAELAERAGIPKGVFSVVTGSAGEVGGELTSNPIVRKLTFTGSTEIGRQLMAECAQDIKKVSLELGGNAPFIVFDDADLDAAVEGALISKYRNNGQTCVCANRLYVQDGVYDAFVDKLKAAVAKLNIGNGLEAGVTTGPLIDAKAVAKVEEHIADAVSKGAKVVSGGKPHALGGTFFEPTILVDVPKNALVSKDETFGPLAPVFRFKDEAEVIAMSNDTEFGLASYFYARDLARVFRVAEQLEYGMVGINTGLISNEVAPFGGIKASGLGREGSKYGIEDYLEIKYLCLGGI.

Residues 156 to 157, 180 to 183, and 233 to 234 each bind NADP(+); these read WN, KPAS, and GS. E255 (proton acceptor) is an active-site residue. L256 is a binding site for NADP(+). C289 serves as the catalytic Nucleophile. E386 contacts NADP(+).

The protein belongs to the aldehyde dehydrogenase family.

The enzyme catalyses 5-oxopentanoate + NADP(+) + H2O = glutarate + NADPH + 2 H(+). It participates in amino-acid degradation. Functionally, catalyzes the conversion of 5-oxopentanoate (glutarate semialdehyde) to glutarate. Involved in L-lysine degradation. In Pseudomonas aeruginosa (strain ATCC 15692 / DSM 22644 / CIP 104116 / JCM 14847 / LMG 12228 / 1C / PRS 101 / PAO1), this protein is Glutarate-semialdehyde dehydrogenase.